Consider the following 369-residue polypeptide: UDP-3-O-acylglucosamine N-acyltransferase (369 aa).

His263 (proton acceptor) is an active-site residue.

Belongs to the transferase hexapeptide repeat family. LpxD subfamily. Homotrimer.

The enzyme catalyses a UDP-3-O-[(3R)-3-hydroxyacyl]-alpha-D-glucosamine + a (3R)-hydroxyacyl-[ACP] = a UDP-2-N,3-O-bis[(3R)-3-hydroxyacyl]-alpha-D-glucosamine + holo-[ACP] + H(+). It functions in the pathway bacterial outer membrane biogenesis; LPS lipid A biosynthesis. Catalyzes the N-acylation of UDP-3-O-acylglucosamine using 3-hydroxyacyl-ACP as the acyl donor. Is involved in the biosynthesis of lipid A, a phosphorylated glycolipid that anchors the lipopolysaccharide to the outer membrane of the cell. In Burkholderia ambifaria (strain MC40-6), this protein is UDP-3-O-acylglucosamine N-acyltransferase.